The primary structure comprises 199 residues: V-set and transmembrane domain-containing protein 5 (199 aa).

The first 27 residues, 1 to 27, serve as a signal peptide directing secretion; sequence MRPLRCGERTQGIPLGLLAFWVTAARC. The Extracellular segment spans residues 28 to 146; the sequence is LQSQGVSLYI…VSEIRYEDLH (119 aa). The Ig-like C2-type domain maps to 35–138; it reads LYIPQSAINA…QSGTILLRVS (104 aa). N-linked (GlcNAc...) asparagine glycans are attached at residues N43, N87, and N101. The helical transmembrane segment at 147–167 threads the bilayer; the sequence is FVAVFFALLAAVAVVLISLMW. Residues 168–199 lie on the Cytoplasmic side of the membrane; it reads VCNQCAYKFQRKRRYKLKESTTEEIEMKEVEC. An important for CDC42-dependent filopodia induction region spans residues 169 to 185; sequence CNQCAYKFQRKRRYKLK.

In terms of assembly, can homooligomerize through cis interactions within the same cell membrane. N-glycosylated. Highly expressed in the central nervous system (CNS), with the highest expression in thalamus, hippocampus, cerebrum, midbrain and spinal cord. Also highly expressed in stomach, kidney and small intestine.

It is found in the cell membrane. It localises to the cell projection. The protein localises to the dendrite. Its subcellular location is the axon. In terms of biological role, cell adhesion-like membrane protein of the central nervous system (CNS) which modulates both the position and complexity of central neurons by altering their membrane morphology and dynamics. Involved in the formation of neuronal dendrites and protrusions including dendritic filopodia. In synaptogenesis, regulates synapse formation by altering dendritic spine morphology and actin distribution. Promotes formation of unstable neuronal spines such as thin and branched types. Regulates neuronal morphogenesis and migration during cortical development in the brain. The sequence is that of V-set and transmembrane domain-containing protein 5 from Mus musculus (Mouse).